A 197-amino-acid chain; its full sequence is C-type lectin domain family 3 member A (197 aa).

An N-terminal signal peptide occupies residues 1–22; the sequence is MAKNGLVICILVITLLLDQTTS. Intrachain disulfides connect C68–C78, C95–C191, and C167–C183. In terms of domain architecture, C-type lectin spans 74-192; that stretch reads VHKKCYLASE…CRSSKRYICE (119 aa).

In terms of tissue distribution, restricted to cartilage and breast. Also expressed in breast cancers.

It localises to the secreted. Promotes cell adhesion to laminin-332 and fibronectin. The protein is C-type lectin domain family 3 member A (CLEC3A) of Homo sapiens (Human).